We begin with the raw amino-acid sequence, 276 residues long: 2-dehydro-3-deoxyphosphooctonate aldolase (276 aa).

The protein belongs to the KdsA family.

It localises to the cytoplasm. The enzyme catalyses D-arabinose 5-phosphate + phosphoenolpyruvate + H2O = 3-deoxy-alpha-D-manno-2-octulosonate-8-phosphate + phosphate. It functions in the pathway carbohydrate biosynthesis; 3-deoxy-D-manno-octulosonate biosynthesis; 3-deoxy-D-manno-octulosonate from D-ribulose 5-phosphate: step 2/3. It participates in bacterial outer membrane biogenesis; lipopolysaccharide biosynthesis. The chain is 2-dehydro-3-deoxyphosphooctonate aldolase from Helicobacter pylori (strain P12).